Reading from the N-terminus, the 324-residue chain is Mating-type protein A-3 (324 aa).

A DNA-binding region (HMG box) is located at residues 147 to 215; the sequence is TSRPRNQFVL…RHRAENPHLY (69 aa).

The protein localises to the nucleus. In terms of biological role, required, together with mating-type protein A-2, for efficient ascospore formation. The sequence is that of Mating-type protein A-3 (mtA-3) from Neurospora crassa (strain ATCC 24698 / 74-OR23-1A / CBS 708.71 / DSM 1257 / FGSC 987).